Reading from the N-terminus, the 219-residue chain is Predicted GPI-anchored protein 6 (219 aa).

Positions 1–19 (MQFQTLLVVAGSLVASTLA) are cleaved as a signal peptide. 3 N-linked (GlcNAc...) asparagine glycosylation sites follow: Asn21, Asn173, and Asn188. Gly194 carries GPI-anchor amidated glycine lipidation. A propeptide spans 195-219 (GAVGGASNQITVGFAAIAGLAAILL) (removed in mature form).

Belongs to the flocculin family. The GPI-anchor is attached to the protein in the endoplasmic reticulum and serves to target the protein to the cell surface. There, the glucosamine-inositol phospholipid moiety is cleaved off and the GPI-modified mannoprotein is covalently attached via its lipidless GPI glycan remnant to the 1,6-beta-glucan of the outer cell wall layer.

The protein localises to the secreted. Its subcellular location is the cell wall. The protein resides in the membrane. Probable cell wall protein that participates directly in adhesive cell-cell interactions. The sequence is that of Predicted GPI-anchored protein 6 (PGA6) from Candida albicans (strain SC5314 / ATCC MYA-2876) (Yeast).